We begin with the raw amino-acid sequence, 75 residues long: Large ribosomal subunit protein bL28 (75 aa).

Belongs to the bacterial ribosomal protein bL28 family.

The chain is Large ribosomal subunit protein bL28 from Buchnera aphidicola subsp. Acyrthosiphon pisum (strain APS) (Acyrthosiphon pisum symbiotic bacterium).